The chain runs to 506 residues: GMP synthase [glutamine-hydrolyzing] (506 aa).

Residues 3–188 (GFVILDFGSQ…AQGMCKAPAD (186 aa)) form the Glutamine amidotransferase type-1 domain. Cys-80 functions as the Nucleophile in the catalytic mechanism. Active-site residues include His-162 and Glu-164. Residues 189–381 (WDAPHIKDIL…LGLPKEMLWR (193 aa)) enclose the GMPS ATP-PPase domain. An ATP-binding site is contributed by 217 to 223 (SGGVDST).

As to quaternary structure, homodimer.

The catalysed reaction is XMP + L-glutamine + ATP + H2O = GMP + L-glutamate + AMP + diphosphate + 2 H(+). Its pathway is purine metabolism; GMP biosynthesis; GMP from XMP (L-Gln route): step 1/1. Functionally, catalyzes the synthesis of GMP from XMP. This is GMP synthase [glutamine-hydrolyzing] from Bdellovibrio bacteriovorus (strain ATCC 15356 / DSM 50701 / NCIMB 9529 / HD100).